Consider the following 309-residue polypeptide: MPDLDRIVKDIAEEMRARPDRGAVASYIPELARADPQAFGLVVIDGDGRVAAGGDADIAFSIQSISKVFTLTLALGMVGDRLWRRVGREPSGSPFNSIVQLERENGIPRNPFINAGAIAVTDVILSGHQPREALGEILRFMQFLAQDDSIAIDDRVAASEKRTGFRNAALANYMRSFDVIENPVDYTLGVYFHHCAIAMTCRQLATAGLFLAYSGHHPLAGHSVISAERARRINAIMLTCGHYDGSGDFAYRVGLPGKSGVGGGILAVAPGRASICVWSPGLDAAGNSHLGRIALEMLVKRTGWSIFGV.

Substrate is bound by residues S64, N114, E160, N167, Y191, Y243, and V261.

Belongs to the glutaminase family. As to quaternary structure, homotetramer.

The enzyme catalyses L-glutamine + H2O = L-glutamate + NH4(+). In Methylorubrum populi (strain ATCC BAA-705 / NCIMB 13946 / BJ001) (Methylobacterium populi), this protein is Glutaminase.